The primary structure comprises 183 residues: Ribosome-recycling factor (183 aa).

It belongs to the RRF family.

Its subcellular location is the cytoplasm. Its function is as follows. Responsible for the release of ribosomes from messenger RNA at the termination of protein biosynthesis. May increase the efficiency of translation by recycling ribosomes from one round of translation to another. The sequence is that of Ribosome-recycling factor from Ureaplasma urealyticum serovar 10 (strain ATCC 33699 / Western).